The following is a 95-amino-acid chain: MICTVYKSRRKLDTYLFVEKRDDFSSVPEALMTMFGPPQLVMLVPLSKRTSLAMADIEKVRSELKDKGYYLQLPPPKANLLEEHKLSLGIDKYAP.

In terms of domain architecture, YcgL spans 1 to 85 (MICTVYKSRR…PKANLLEEHK (85 aa)).

The sequence is that of YcgL domain-containing protein Sden_1630 from Shewanella denitrificans (strain OS217 / ATCC BAA-1090 / DSM 15013).